We begin with the raw amino-acid sequence, 132 residues long: Small ribosomal subunit protein uS8 (132 aa).

The protein belongs to the universal ribosomal protein uS8 family. As to quaternary structure, part of the 30S ribosomal subunit. Contacts proteins S5 and S12.

Functionally, one of the primary rRNA binding proteins, it binds directly to 16S rRNA central domain where it helps coordinate assembly of the platform of the 30S subunit. This Borrelia turicatae (strain 91E135) protein is Small ribosomal subunit protein uS8.